The chain runs to 123 residues: Cell division protein SepF (123 aa).

The protein belongs to the SepF family. As to quaternary structure, homodimer. Interacts with FtsZ.

Its subcellular location is the cytoplasm. Its function is as follows. Cell division protein that is part of the divisome complex and is recruited early to the Z-ring. Probably stimulates Z-ring formation, perhaps through the cross-linking of FtsZ protofilaments. Its function overlaps with FtsA. The polypeptide is Cell division protein SepF (Tropheryma whipplei (strain TW08/27) (Whipple's bacillus)).